The primary structure comprises 210 residues: Fibrillarin-like rRNA/tRNA 2'-O-methyltransferase (210 aa).

Residues 72-73 (TT), 88-89 (EF), 113-114 (DA), and 134-137 (DVAT) contribute to the S-adenosyl-L-methionine site.

The protein belongs to the methyltransferase superfamily. Fibrillarin family. Interacts with nop5. Component of box C/D small ribonucleoprotein (sRNP) particles that contain rpl7ae, FlpA and nop5, plus a guide RNA.

Functionally, involved in pre-rRNA and tRNA processing. Utilizes the methyl donor S-adenosyl-L-methionine to catalyze the site-specific 2'-hydroxyl methylation of ribose moieties in rRNA and tRNA. Site specificity is provided by a guide RNA that base pairs with the substrate. Methylation occurs at a characteristic distance from the sequence involved in base pairing with the guide RNA. This is Fibrillarin-like rRNA/tRNA 2'-O-methyltransferase from Halobacterium salinarum (strain ATCC 29341 / DSM 671 / R1).